Reading from the N-terminus, the 388-residue chain is S-adenosylmethionine synthase (388 aa).

Histidine 16 contributes to the ATP binding site. Residue aspartate 18 participates in Mg(2+) binding. Glutamate 44 contacts K(+). L-methionine-binding residues include glutamate 57 and glutamine 100. The tract at residues 100–110 is flexible loop; that stretch reads QSPDIAQGVDK. Residues 167–169, 233–234, aspartate 242, 248–249, alanine 265, and lysine 269 each bind ATP; these read DAK, RF, and RK. Aspartate 242 is an L-methionine binding site. Lysine 273 is an L-methionine binding site.

The protein belongs to the AdoMet synthase family. As to quaternary structure, homotetramer; dimer of dimers. Mg(2+) serves as cofactor. K(+) is required as a cofactor.

Its subcellular location is the cytoplasm. The enzyme catalyses L-methionine + ATP + H2O = S-adenosyl-L-methionine + phosphate + diphosphate. The protein operates within amino-acid biosynthesis; S-adenosyl-L-methionine biosynthesis; S-adenosyl-L-methionine from L-methionine: step 1/1. Its function is as follows. Catalyzes the formation of S-adenosylmethionine (AdoMet) from methionine and ATP. The overall synthetic reaction is composed of two sequential steps, AdoMet formation and the subsequent tripolyphosphate hydrolysis which occurs prior to release of AdoMet from the enzyme. The chain is S-adenosylmethionine synthase from Polynucleobacter asymbioticus (strain DSM 18221 / CIP 109841 / QLW-P1DMWA-1) (Polynucleobacter necessarius subsp. asymbioticus).